Reading from the N-terminus, the 242-residue chain is Purine nucleoside phosphorylase PA4543 (242 aa).

Zn(2+) is bound by residues His-69, Cys-103, and His-120.

This sequence belongs to the purine nucleoside phosphorylase YfiH/LACC1 family. Homodimer. Requires Cu(2+) as cofactor. The cofactor is Zn(2+).

It catalyses the reaction adenosine + phosphate = alpha-D-ribose 1-phosphate + adenine. The catalysed reaction is S-methyl-5'-thioadenosine + phosphate = 5-(methylsulfanyl)-alpha-D-ribose 1-phosphate + adenine. The enzyme catalyses inosine + phosphate = alpha-D-ribose 1-phosphate + hypoxanthine. It carries out the reaction adenosine + H2O + H(+) = inosine + NH4(+). Purine nucleoside enzyme that catalyzes the phosphorolysis of adenosine and inosine nucleosides, yielding D-ribose 1-phosphate and the respective free bases, adenine and hypoxanthine. Also catalyzes the phosphorolysis of S-methyl-5'-thioadenosine into adenine and S-methyl-5-thio-alpha-D-ribose 1-phosphate. Also has adenosine deaminase activity. The protein is Purine nucleoside phosphorylase PA4543 of Pseudomonas aeruginosa (strain ATCC 15692 / DSM 22644 / CIP 104116 / JCM 14847 / LMG 12228 / 1C / PRS 101 / PAO1).